Consider the following 389-residue polypeptide: Probable peptidoglycan glycosyltransferase FtsW (389 aa).

The Cytoplasmic segment spans residues 1–14; sequence MPIRDWRQQSQRWP. The helical transmembrane segment at 15-35 threads the bilayer; that stretch reads IDYWLIGALAILITLGLTMVA. The Periplasmic segment spans residues 36 to 57; the sequence is SSSIAISEKRFGDPTHYLLRQM. A helical membrane pass occupies residues 58–78; the sequence is FSMGLGLMAAYIVLKIPLSFW. At 79-84 the chain is on the cytoplasmic side; sequence RKHRGQ. Residues 85-105 traverse the membrane as a helical segment; that stretch reads LFIVGLVLLVLVLVFGREING. Over 106 to 111 the chain is Periplasmic; it reads SKRWLP. Residues 112-132 form a helical membrane-spanning segment; that stretch reads LVLMNFQVSEFMKIAVVVFMA. Residues 133–144 are Cytoplasmic-facing; the sequence is GYLDRHATAVRE. Residues 145-165 form a helical membrane-spanning segment; sequence SFEAVIRLALPFGVMAILLLL. At 166–168 the chain is on the periplasmic side; sequence EPD. Residues 169–189 traverse the membrane as a helical segment; that stretch reads FGSTFVIAVIITGMLLIAGAP. Residues 190-191 lie on the Cytoplasmic side of the membrane; the sequence is WR. Residues 192–212 form a helical membrane-spanning segment; sequence FFVMTVLPIATLLVMMVITSP. At 213–268 the chain is on the periplasmic side; the sequence is YRMARVTNFLDPWSDPFGNGYQLTQALIASGRGEWFGVGIGESVQKLLYLPDAHTD. The helical transmembrane segment at 269 to 289 threads the bilayer; that stretch reads FLFSIYAEEYGLIGVAFLALL. The Cytoplasmic portion of the chain corresponds to 290–310; the sequence is YLTLLYRCFRIGRKAFNQTHY. The chain crosses the membrane as a helical span at residues 311–331; that stretch reads FGGLIAYGVGIWIVLQAMINM. Residues 332–344 lie on the Periplasmic side of the membrane; sequence GVNLGLFPTKGLT. The chain crosses the membrane as a helical span at residues 345–365; the sequence is LPFMSYGGSSVLMLFIGVAMV. Residues 366 to 389 are Cytoplasmic-facing; it reads LRVDLETRQAVLEHSVDESGQGKR.

The protein belongs to the SEDS family. FtsW subfamily.

The protein resides in the cell inner membrane. The enzyme catalyses [GlcNAc-(1-&gt;4)-Mur2Ac(oyl-L-Ala-gamma-D-Glu-L-Lys-D-Ala-D-Ala)](n)-di-trans,octa-cis-undecaprenyl diphosphate + beta-D-GlcNAc-(1-&gt;4)-Mur2Ac(oyl-L-Ala-gamma-D-Glu-L-Lys-D-Ala-D-Ala)-di-trans,octa-cis-undecaprenyl diphosphate = [GlcNAc-(1-&gt;4)-Mur2Ac(oyl-L-Ala-gamma-D-Glu-L-Lys-D-Ala-D-Ala)](n+1)-di-trans,octa-cis-undecaprenyl diphosphate + di-trans,octa-cis-undecaprenyl diphosphate + H(+). Its pathway is cell wall biogenesis; peptidoglycan biosynthesis. Functionally, peptidoglycan polymerase that is essential for cell division. In Hydrogenovibrio crunogenus (strain DSM 25203 / XCL-2) (Thiomicrospira crunogena), this protein is Probable peptidoglycan glycosyltransferase FtsW.